Here is a 248-residue protein sequence, read N- to C-terminus: Ribosomal RNA small subunit methyltransferase A (248 aa).

The S-adenosyl-L-methionine site is built by His-11, Leu-13, Gly-38, Glu-60, Asp-83, and Asn-101.

The protein belongs to the class I-like SAM-binding methyltransferase superfamily. rRNA adenine N(6)-methyltransferase family. RsmA subfamily.

It localises to the cytoplasm. It catalyses the reaction adenosine(1518)/adenosine(1519) in 16S rRNA + 4 S-adenosyl-L-methionine = N(6)-dimethyladenosine(1518)/N(6)-dimethyladenosine(1519) in 16S rRNA + 4 S-adenosyl-L-homocysteine + 4 H(+). Specifically dimethylates two adjacent adenosines (A1518 and A1519) in the loop of a conserved hairpin near the 3'-end of 16S rRNA in the 30S particle. May play a critical role in biogenesis of 30S subunits. The sequence is that of Ribosomal RNA small subunit methyltransferase A from Aquifex aeolicus (strain VF5).